The chain runs to 578 residues: Endonuclease GajA (578 aa).

The ATPase domain stretch occupies residues Met-1 to Lys-341. Residue Asp-32–Thr-36 coordinates ATP. Residues Leu-370 to Ile-510 are toprim domain. A divalent metal cation-binding residues include Glu-379, Glu-383, Asp-463, Glu-464, and Glu-513.

Homotetramer. Forms the core of the anti-phage defense complex. Interacts with GajB; 2 GajB dimers dock at opposite sides of the GajA complex to form a 4:4 GajA-GajB assembly (GajAB). GajAB interacts with Bacillus phage Phi3T Gad1 protein; this interaction forms a 4:4:8 GajAB-Gad1 complex and leads to GajAB inhibition. Requires Mg(2+) as cofactor. Mn(2+) serves as cofactor.

With respect to regulation, endonuclease activity inhibited by all NTPs, dNTPs, NDPs (at 0.5 mM, UDP not tested) and AMP-PNP; not inhibited by any tested NMP, dNMP or nucleoside. Inhibited by 100 mM NaCl, 100 mM KCl, 0.5 mM Co(2+) and 0.5 mM Ni(2+). Functionally, component of antiviral defense system Gabija type I, composed of GajA and GajB. Endonuclease that nicks double-stranded DNA within the sequence 5'-TNNNCGGGNNA-3' in the absence of nucleotides (NTP, dNTP and NDPs), cleaving after C-1. Has no detected ATPase activity. Expression of Gabija type I in B.subtilis (strain BEST7003) confers resistance to phages phi105, phi29, rho14, SpBeta and SBSphiC. Expression of Gabija type I in E.coli B (strain ATCC 11303) confers resistance to phage T7. It is thought that this enzyme is strongly suppressed during physiological growth (in E.coli total nucleotide concentration is over 8.7 mM in mid-log phase), but during viral replication, when nucleotides are rapidly consumed, it is de-suppressed and degrades target DNA. The protein is Endonuclease GajA of Bacillus cereus (strain VD045).